Here is a 159-residue protein sequence, read N- to C-terminus: NADH dehydrogenase [ubiquinone] 1 beta subcomplex subunit 10 (159 aa).

Belongs to the complex I NDUFB10 subunit family. Complex I is composed of 45 different subunits.

Its subcellular location is the mitochondrion inner membrane. Its function is as follows. Accessory subunit of the mitochondrial membrane respiratory chain NADH dehydrogenase (Complex I), that is believed not to be involved in catalysis. Complex I functions in the transfer of electrons from NADH to the respiratory chain. The immediate electron acceptor for the enzyme is believed to be ubiquinone. The polypeptide is NADH dehydrogenase [ubiquinone] 1 beta subcomplex subunit 10 (Bombyx mori (Silk moth)).